A 539-amino-acid chain; its full sequence is Phosphatidylinositol 4-phosphate 5-kinase type-1 beta (539 aa).

The tract at residues 1–21 (MSSTAENGDAVPGKQNEEKTY) is disordered. Residues 25-395 (ASSAIKGAIQ…RFLKFMNSRV (371 aa)) enclose the PIPK domain. 3 positions are modified to phosphoserine: S445, S447, and S448.

Interacts with RAC1, AJUBA, PLD1, PLD2 and ARF1.

It is found in the cytoplasm. It localises to the cytosol. The protein resides in the cell membrane. The protein localises to the endomembrane system. It catalyses the reaction a 1,2-diacyl-sn-glycero-3-phospho-(1D-myo-inositol 4-phosphate) + ATP = a 1,2-diacyl-sn-glycero-3-phospho-(1D-myo-inositol-4,5-bisphosphate) + ADP + H(+). The enzyme catalyses 1-octadecanoyl-2-(5Z,8Z,11Z,14Z)-eicosatetraenoyl-sn-glycero-3-phospho-1D-myo-inositol 4-phosphate + ATP = 1-octadecanoyl-2-(5Z,8Z,11Z,14Z)-eicosatetraenoyl-sn-glycero-3-phospho-1D-myo-inositol 4,5-bisphosphate + ADP + H(+). The catalysed reaction is 1-octadecanoyl-2-(9Z)-octadecenoyl-sn-glycero-3-phospho-1D-myo-inositol 4-phosphate + ATP = 1-octadecanoyl-2-(9Z)-octadecenoyl-sn-glycero-3-phospho-1D-myo-inositol 4,5-bisphosphate + ADP + H(+). It carries out the reaction 1-octadecanoyl-2-(9Z)-octadecenoyl-sn-glycero-3-phospho-1D-myo-inositol + ATP = 1-octadecanoyl-2-(9Z)-octadecenoyl-sn-glycero-3-phospho-1D-myo-inositol 5-phosphate + ADP + H(+). It catalyses the reaction 1-octadecanoyl-2-(9Z,12Z)-octadecadienoyl-sn-glycero-3-phospho-1D-myo-inositol + ATP = 1-octadecanoyl-2-(9Z,12Z)-octadecadienoyl-sn-glycero-3-phospho-1D-myo-inositol 5-phosphate + ADP + H(+). The enzyme catalyses 1-octadecanoyl-2-(5Z,8Z,11Z,14Z-eicosatetraenoyl)-sn-glycero-3-phospho-(1D-myo-inositol) + ATP = 1-octadecanoyl-2-(5Z,8Z,11Z,14Z)-eicosatetraenoyl-sn-glycero-3-phospho-1D-myo-inositol 5-phosphate + ADP + H(+). The catalysed reaction is 1,2-di-(9Z,12Z)-octadecadienoyl-sn-glycero-3-phospho-1D-myo-inositol + ATP = 1,2-di(9Z,12Z)-octadecadienoyl-sn-glycero-3-phospho-1D-myo-inositol 5-phosphate + ADP + H(+). In terms of biological role, catalyzes the phosphorylation of phosphatidylinositol 4-phosphate (PtdIns(4)P/PI4P) to form phosphatidylinositol 4,5-bisphosphate (PtdIns(4,5)P2/PIP2), a lipid second messenger that regulates several cellular processes such as signal transduction, vesicle trafficking, actin cytoskeleton dynamics, cell adhesion, and cell motility. PtdIns(4,5)P2 can directly act as a second messenger or can be utilized as a precursor to generate other second messengers: inositol 1,4,5-trisphosphate (IP3), diacylglycerol (DAG) or phosphatidylinositol-3,4,5-trisphosphate (PtdIns(3,4,5)P3/PIP3). Mediates RAC1-dependent reorganization of actin filaments. Contributes to the activation of phospholipase PLD2. Together with PIP5K1A, is required, after stimulation by G-protein coupled receptors, for the synthesis of IP3 that will induce stable platelet adhesion. The sequence is that of Phosphatidylinositol 4-phosphate 5-kinase type-1 beta from Rattus norvegicus (Rat).